Reading from the N-terminus, the 148-residue chain is Large ribosomal subunit protein bL9 (148 aa).

It belongs to the bacterial ribosomal protein bL9 family.

Binds to the 23S rRNA. The polypeptide is Large ribosomal subunit protein bL9 (Pseudomonas savastanoi pv. phaseolicola (strain 1448A / Race 6) (Pseudomonas syringae pv. phaseolicola (strain 1448A / Race 6))).